The sequence spans 105 residues: MSKIHVRKKDTVVVISGKDKGKIGEVLSVLPKKGKVIVKDVNVVTKHQKPNRENMQGGIIHKEAPIFSSKVMLYCDKCKSATRISNKILEDGTKVRICKKCGETF.

Belongs to the universal ribosomal protein uL24 family. In terms of assembly, part of the 50S ribosomal subunit.

Functionally, one of two assembly initiator proteins, it binds directly to the 5'-end of the 23S rRNA, where it nucleates assembly of the 50S subunit. In terms of biological role, one of the proteins that surrounds the polypeptide exit tunnel on the outside of the subunit. The sequence is that of Large ribosomal subunit protein uL24 from Clostridium botulinum (strain 657 / Type Ba4).